We begin with the raw amino-acid sequence, 133 residues long: Small ribosomal subunit protein uS8 (133 aa).

This sequence belongs to the universal ribosomal protein uS8 family. In terms of assembly, part of the 30S ribosomal subunit. Contacts proteins S5 and S12.

In terms of biological role, one of the primary rRNA binding proteins, it binds directly to 16S rRNA central domain where it helps coordinate assembly of the platform of the 30S subunit. This is Small ribosomal subunit protein uS8 from Amoebophilus asiaticus (strain 5a2).